A 159-amino-acid polypeptide reads, in one-letter code: MHKRAIYPGTFDPVTNGHADLIERAANLFEHVIIGIAANPSKQPRFTLAERVELLKTVTAHLDNVEVVGFSGLLVDFAKEQNASVLVRGLRAVSDFEYEFQLANMNRRLSPDLESVFLTPAEENSFISSTLVKEVALHGGDVSQFVHAEVANALTKKAN.

T10 is a binding site for substrate. Residues 10–11 (TF) and H18 contribute to the ATP site. Substrate-binding residues include K42, L74, and R88. ATP-binding positions include 89 to 91 (GLR), E99, and 124 to 130 (NSFISST).

Belongs to the bacterial CoaD family. Homohexamer. Mg(2+) is required as a cofactor.

It is found in the cytoplasm. It catalyses the reaction (R)-4'-phosphopantetheine + ATP + H(+) = 3'-dephospho-CoA + diphosphate. The protein operates within cofactor biosynthesis; coenzyme A biosynthesis; CoA from (R)-pantothenate: step 4/5. Its function is as follows. Reversibly transfers an adenylyl group from ATP to 4'-phosphopantetheine, yielding dephospho-CoA (dPCoA) and pyrophosphate. This Shewanella halifaxensis (strain HAW-EB4) protein is Phosphopantetheine adenylyltransferase.